Consider the following 117-residue polypeptide: Probable non-functional immunoglobulin heavy variable 7-81 (117 aa).

The signal sequence occupies residues 1 to 19 (MDWTWSILFLVAAATGTYS). Positions 20–44 (QVQLVQSGHEVKQPGASVKVSCKAS) are framework-1. The Ig-like domain maps to 20–117 (QVQLVQSGHE…EDMAMYYCAR (98 aa)). Cysteines 41 and 115 form a disulfide. Residues 45 to 52 (GYSFTTYG) are complementarity-determining-1. Positions 53-69 (MNWVPQAPGQGLEWMGW) are framework-2. Residues 70 to 77 (FNTYTGNP) form a complementarity-determining-2 region. Residue N76 is glycosylated (N-linked (GlcNAc...) asparagine). The tract at residues 78–115 (TYAQGFTGRFVFSMDTSASTAYLQISSLKAEDMAMYYC) is framework-3. The tract at residues 116–117 (AR) is complementarity-determining-3.

As to quaternary structure, immunoglobulins are composed of two identical heavy chains and two identical light chains; disulfide-linked.

It is found in the secreted. The protein resides in the cell membrane. In terms of biological role, probable non-functional open reading frame (ORF) of V region of the variable domain of immunoglobulin heavy chains. Non-functional ORF generally cannot participate in the synthesis of a productive immunoglobulin chain due to altered V-(D)-J or switch recombination and/or splicing site (at mRNA level) and/or conserved amino acid change (protein level). Immunoglobulins, also known as antibodies, are membrane-bound or secreted glycoproteins produced by B lymphocytes. In the recognition phase of humoral immunity, the membrane-bound immunoglobulins serve as receptors which, upon binding of a specific antigen, trigger the clonal expansion and differentiation of B lymphocytes into immunoglobulins-secreting plasma cells. Secreted immunoglobulins mediate the effector phase of humoral immunity, which results in the elimination of bound antigens. The antigen binding site is formed by the variable domain of one heavy chain, together with that of its associated light chain. Thus, each immunoglobulin has two antigen binding sites with remarkable affinity for a particular antigen. The variable domains are assembled by a process called V-(D)-J rearrangement and can then be subjected to somatic hypermutations which, after exposure to antigen and selection, allow affinity maturation for a particular antigen. The protein is Probable non-functional immunoglobulin heavy variable 7-81 of Homo sapiens (Human).